We begin with the raw amino-acid sequence, 321 residues long: Basic peroxidase (321 aa).

The N-terminal stretch at 1–30 (MSYHKSSGTILMVPLFMLLISVNYFMSCNA) is a signal peptide. Position 31 is a pyrrolidone carboxylic acid (Gln-31). Cystine bridges form between Cys-41-Cys-117, Cys-74-Cys-79, Cys-123-Cys-317, and Cys-202-Cys-228. The active-site Proton acceptor is His-72. Ca(2+)-binding residues include Asp-73, Val-76, Gly-78, Asp-80, and Ser-82. Substrate is bound at residue Pro-165. His-195 serves as a coordination point for heme b. Thr-196 contacts Ca(2+). N-linked (GlcNAc...) asparagine glycans are attached at residues Asn-211 and Asn-221. Residues Asp-241, Thr-244, and Asp-249 each coordinate Ca(2+).

It belongs to the peroxidase family. Classical plant (class III) peroxidase subfamily. Heme b serves as cofactor. The cofactor is Ca(2+). In terms of processing, N-glycosylated. Expressed in tracheary elements, roots, young and old hypocotyls, and stems in the partially glycosylated form and in roots and young hypocotyls in the fully glycosylated form. None of the isoforms is significantly expressed in leaves or cotyledons.

The protein localises to the secreted. The enzyme catalyses 2 a phenolic donor + H2O2 = 2 a phenolic radical donor + 2 H2O. Removal of H(2)O(2), oxidation of toxic reductants, biosynthesis and degradation of lignin, suberization, auxin catabolism, response to environmental stresses such as wounding, pathogen attack and oxidative stress. These functions might be dependent on each isozyme/isoform in each plant tissue. Involved in the synthesis of highly polymerized lignins. This is Basic peroxidase (POD1) from Zinnia elegans (Garden zinnia).